Here is a 23-residue protein sequence, read N- to C-terminus: VWLSALKFIGKHLAKHQLSKLGR.

Leucine 21 is subject to Leucine amide.

As to expression, expressed by the venom gland.

It localises to the secreted. It is found in the target cell membrane. Its function is as follows. Has strong antibacterial activity and biofilm inhibition effects against Gram-positive and -negative bacteria including E.coli, S.epidermidis, and A.baumannii and oxacillin-resistant S.aureus and meropenem-resistant P.aeruginosa. Is not cytotoxic against human foreskin fibroblast Hs27 or hemolytic against mammalian red blood cells. Its mechanism of action involves binding to lipoteichoic acid and lipopolysaccharide of Gram-positive and Gram-negative bacterial membranes, respectively, to destroy the bacterial membrane. In addition, it shows anti-inflammatory effects by inhibiting the expression of pro-inflammatory cytokines that are increased during bacterial infection in Hs27 cells. The polypeptide is Lycosin-II (Lycosa singoriensis (Wolf spider)).